A 307-amino-acid chain; its full sequence is Aspartate carbamoyltransferase catalytic subunit (307 aa).

2 residues coordinate carbamoyl phosphate: arginine 59 and threonine 60. Lysine 87 is an L-aspartate binding site. Residues arginine 109, histidine 137, and glutamine 140 each coordinate carbamoyl phosphate. L-aspartate-binding residues include arginine 173 and arginine 223. Positions 266 and 267 each coordinate carbamoyl phosphate.

This sequence belongs to the aspartate/ornithine carbamoyltransferase superfamily. ATCase family. Heterododecamer (2C3:3R2) of six catalytic PyrB chains organized as two trimers (C3), and six regulatory PyrI chains organized as three dimers (R2).

It catalyses the reaction carbamoyl phosphate + L-aspartate = N-carbamoyl-L-aspartate + phosphate + H(+). It functions in the pathway pyrimidine metabolism; UMP biosynthesis via de novo pathway; (S)-dihydroorotate from bicarbonate: step 2/3. In terms of biological role, catalyzes the condensation of carbamoyl phosphate and aspartate to form carbamoyl aspartate and inorganic phosphate, the committed step in the de novo pyrimidine nucleotide biosynthesis pathway. The chain is Aspartate carbamoyltransferase catalytic subunit from Helicobacter pylori (strain ATCC 700392 / 26695) (Campylobacter pylori).